We begin with the raw amino-acid sequence, 539 residues long: Interleukin-2 receptor subunit beta (539 aa).

The signal sequence occupies residues 1–26 (MATIALPWSLSLYVFLLLLATPWASA). The Extracellular segment spans residues 27–240 (AVKNCSHLEC…RTRPADPMKE (214 aa)). Asparagine 30, asparagine 43, asparagine 55, and asparagine 71 each carry an N-linked (GlcNAc...) asparagine glycan. Cysteine 36 and cysteine 46 are joined by a disulfide. Cysteine 74 and cysteine 86 are oxidised to a cystine. A Fibronectin type-III domain is found at 135–235 (APHSLQVLHI…QPLTFRTRPA (101 aa)). N-linked (GlcNAc...) asparagine glycans are attached at residues asparagine 150 and asparagine 216. Positions 221-225 (WSPWS) match the WSXWS motif motif. The chain crosses the membrane as a helical span at residues 241 to 268 (ILPMSWLRYLLLVLGCFSGFFSCVYILV). At 269–539 (KCRYLGPWLK…LQAQDSVHLI (271 aa)) the chain is on the cytoplasmic side. The Box 1 motif motif lies at 281-289 (LKCHIPDPS). Disordered regions lie at residues 395–419 (VEED…GEQD), 440–465 (PNTA…LPSL), and 477–516 (LERM…QGPI).

This sequence belongs to the type I cytokine receptor family. Type 4 subfamily. In terms of assembly, non-covalent dimer of an alpha and a beta subunit. IL2R exists in 3 different forms: a high affinity dimer, an intermediate affinity monomer (beta subunit), and a low affinity monomer (alpha subunit). The high and intermediate affinity forms also associate with a gamma subunit. Interacts with SHB upon interleukin stimulation.

The protein localises to the cell membrane. Its subcellular location is the cell surface. Functionally, receptor for interleukin-2. This beta subunit is involved in receptor mediated endocytosis and transduces the mitogenic signals of IL2. Probably in association with IL15RA, involved in the stimulation of neutrophil phagocytosis by IL15. The chain is Interleukin-2 receptor subunit beta (Il2rb) from Mus musculus (Mouse).